The chain runs to 311 residues: Aspartate carbamoyltransferase catalytic subunit (311 aa).

Carbamoyl phosphate contacts are provided by arginine 55 and threonine 56. An L-aspartate-binding site is contributed by lysine 85. Carbamoyl phosphate contacts are provided by arginine 106, histidine 135, and glutamine 138. Residues arginine 168 and arginine 230 each contribute to the L-aspartate site. Leucine 268 and proline 269 together coordinate carbamoyl phosphate.

Belongs to the aspartate/ornithine carbamoyltransferase superfamily. ATCase family. In terms of assembly, heterododecamer (2C3:3R2) of six catalytic PyrB chains organized as two trimers (C3), and six regulatory PyrI chains organized as three dimers (R2).

The catalysed reaction is carbamoyl phosphate + L-aspartate = N-carbamoyl-L-aspartate + phosphate + H(+). Its pathway is pyrimidine metabolism; UMP biosynthesis via de novo pathway; (S)-dihydroorotate from bicarbonate: step 2/3. Catalyzes the condensation of carbamoyl phosphate and aspartate to form carbamoyl aspartate and inorganic phosphate, the committed step in the de novo pyrimidine nucleotide biosynthesis pathway. The sequence is that of Aspartate carbamoyltransferase catalytic subunit from Klebsiella pneumoniae (strain 342).